A 33-amino-acid chain; its full sequence is Antimicrobial peptide MBP-1 (33 aa).

In terms of tissue distribution, predominantly in the embryo portion of the kernel.

It localises to the secreted. In terms of biological role, inhibitor of both bacterial and fungal growth in vitro. The protein is Antimicrobial peptide MBP-1 of Zea mays (Maize).